A 238-amino-acid polypeptide reads, in one-letter code: Octanoyltransferase (238 aa).

The 181-residue stretch at 44 to 224 folds into the BPL/LPL catalytic domain; sequence AGGPDSLLLL…AVLDALDGRI (181 aa). Residues 82–89, 154–156, and 167–169 contribute to the substrate site; these read RGGKITWH, AIG, and GFA. Catalysis depends on Cys-185, which acts as the Acyl-thioester intermediate.

Belongs to the LipB family.

The protein localises to the cytoplasm. It catalyses the reaction octanoyl-[ACP] + L-lysyl-[protein] = N(6)-octanoyl-L-lysyl-[protein] + holo-[ACP] + H(+). Its pathway is protein modification; protein lipoylation via endogenous pathway; protein N(6)-(lipoyl)lysine from octanoyl-[acyl-carrier-protein]: step 1/2. Its function is as follows. Catalyzes the transfer of endogenously produced octanoic acid from octanoyl-acyl-carrier-protein onto the lipoyl domains of lipoate-dependent enzymes. Lipoyl-ACP can also act as a substrate although octanoyl-ACP is likely to be the physiological substrate. The sequence is that of Octanoyltransferase from Mycolicibacterium gilvum (strain PYR-GCK) (Mycobacterium gilvum (strain PYR-GCK)).